The chain runs to 423 residues: MTITQPDLSVFETVESEVRSYCRGWPTVFDRAQGSRMYDEDGHAYLDFFAGAGSLNYGHNNPVLKRALIDYLERDGVTHGLDMSTAAKRAFLESFQNLILRPRDLPYKVMFPGPTGTNAVESALKLARKVKGREAIVSFTNAFHGMSLGSLAVTGNAFKRAGAGIPLVHGTPMPFDNYFDGKVPDFLWFERLLEDQGSGLNKPAAVIVETVQGEGGINVARPEWLRALAELCKRQDMLLIVDDIQMGCGRTGAFFSFEEAGVTPDIVTVSKSISGYGLPMSLCLFKPELDIWEPGEHNGTFRGNNPAFVTAAAALQTYWADGSAMEKQTLARGEQVEQALISITEENLADVKEYRGRGLVWGIEFKDKDRAGRIAQRAFELGLLIETSGPESEVVKLLPALTITPEELDEGLRTLARAVRETA.

Lys271 is modified (N6-(pyridoxal phosphate)lysine).

The protein belongs to the class-III pyridoxal-phosphate-dependent aminotransferase family. Requires pyridoxal 5'-phosphate as cofactor.

The catalysed reaction is L-2,4-diaminobutanoate + 2-oxoglutarate = L-aspartate 4-semialdehyde + L-glutamate. It functions in the pathway amine and polyamine biosynthesis; ectoine biosynthesis; L-ectoine from L-aspartate 4-semialdehyde: step 1/3. Catalyzes reversively the conversion of L-aspartate beta-semialdehyde (ASA) to L-2,4-diaminobutyrate (DABA) by transamination with L-glutamate. The polypeptide is Diaminobutyrate--2-oxoglutarate transaminase (ectB) (Streptomyces avermitilis (strain ATCC 31267 / DSM 46492 / JCM 5070 / NBRC 14893 / NCIMB 12804 / NRRL 8165 / MA-4680)).